The primary structure comprises 311 residues: Porphobilinogen deaminase (311 aa).

S-(dipyrrolylmethanemethyl)cysteine is present on Cys242.

It belongs to the HMBS family. Monomer. Dipyrromethane is required as a cofactor.

It catalyses the reaction 4 porphobilinogen + H2O = hydroxymethylbilane + 4 NH4(+). The protein operates within porphyrin-containing compound metabolism; protoporphyrin-IX biosynthesis; coproporphyrinogen-III from 5-aminolevulinate: step 2/4. In terms of biological role, tetrapolymerization of the monopyrrole PBG into the hydroxymethylbilane pre-uroporphyrinogen in several discrete steps. The chain is Porphobilinogen deaminase (hemC) from Neisseria meningitidis serogroup B (strain ATCC BAA-335 / MC58).